Reading from the N-terminus, the 508-residue chain is MIHHLKRTKIIATCGPALTKKLWTLAMLDDPAYAAMKAEAYANIENIIKNGVTVIRLNFSHGNHEEQAVRIKIVRDVAKKLNLPVSIMLDTNGPEIRVFETAPEGLKILKDSEVVINTTTKEVAKNNQFSVSDASGTYNMVNDVKVGQKILVDDGKLSLVVKRIDTKNNQVICVAQNDHTIFTKKRLNLPNADYSIPFLSAKDLRDIDFGLTHQIDYIAASFVNTTENIKQLRDYLASKNAKHVKLIAKIESNHALNNIDGIIKASDGIMVARGDLGLEIPYYKVPYWQRYMIKACRFFNKRVITATQMLDSLEKNIQPTRAEVTDVYFAVDRGNDATMLSGETANGAFPLNAVYVMKMIDKQSETFFDYQYNLNYYMANSKARHSEFWKQVVLPLAQKTAPKRKLINSDFKYDFVVHATNNLNEIYALSNARLAAAVIILTNDPQVYTGHGVDYGIFPYLIDQKPQSLSKAEFKSLANVAIKHYQQHGEISQLKQCLGVFHNKIISL.

Arg56 contacts substrate. Residues Asn58, Ser60, Asp90, and Thr91 each contribute to the K(+) site. 58–61 (NFSH) contacts ATP. Residues Arg97 and Lys185 each coordinate ATP. Glu251 is a binding site for Mg(2+). Positions 274, 275, and 307 each coordinate substrate. Asp275 is a Mg(2+) binding site.

It belongs to the pyruvate kinase family. Homotetramer. Mg(2+) is required as a cofactor. The cofactor is K(+).

The enzyme catalyses pyruvate + ATP = phosphoenolpyruvate + ADP + H(+). It participates in carbohydrate degradation; glycolysis; pyruvate from D-glyceraldehyde 3-phosphate: step 5/5. Regulated by phosphoenolpyruvate substrate and is allosterically activated by ribose-5-phosphate, AMP and other nucleoside monophosphates but not by fructose-1,6-bisphosphate. This is Pyruvate kinase (pyk) from Mycoplasma pneumoniae (strain ATCC 29342 / M129 / Subtype 1) (Mycoplasmoides pneumoniae).